Consider the following 162-residue polypeptide: Endoribonuclease YbeY (162 aa).

Histidine 128, histidine 132, and histidine 138 together coordinate Zn(2+).

Belongs to the endoribonuclease YbeY family. Requires Zn(2+) as cofactor.

It localises to the cytoplasm. Single strand-specific metallo-endoribonuclease involved in late-stage 70S ribosome quality control and in maturation of the 3' terminus of the 16S rRNA. This Levilactobacillus brevis (strain ATCC 367 / BCRC 12310 / CIP 105137 / JCM 1170 / LMG 11437 / NCIMB 947 / NCTC 947) (Lactobacillus brevis) protein is Endoribonuclease YbeY.